Here is a 525-residue protein sequence, read N- to C-terminus: NGFI-A-binding protein 2 (525 aa).

Residues 1–31 (MHRAPSPTAEQPPGRGDNTRRTPQPRFKASA) form a disordered region. S6 bears the Phosphoserine mark. The interval 35 to 113 (ALPRTLGELQ…REWATNPGLF (79 aa)) is NCD1. Residues 135 to 238 (GTRKGSMSNG…GAGGGPDRLE (104 aa)) are disordered. Phosphoserine occurs at positions 157, 159, 162, and 171. The segment covering 212 to 234 (AGGGVSEGPGVGGVAAGGAGGGP) has biased composition (gly residues). Residues 267 to 356 (LLKLNKKLAR…SRQVARESTY (90 aa)) form an NCD2 region. A necessary for nuclear localization region spans residues 353 to 384 (ESTYLSSLKGSRLHSEELGGPPLKKLKQEVGE). A Glycyl lysine isopeptide (Lys-Gly) (interchain with G-Cter in SUMO1) cross-link involves residue K379. Positions 381 to 416 (EVGEQSHNEIQQPPPGPESYAPPYRPSLEEDSASLS) are disordered. Position 479 is a phosphoserine (S479). Residues 501–525 (APGPHPALVEGRRSSVKVEAEASRQ) are disordered. Positions 510–525 (EGRRSSVKVEAEASRQ) are enriched in basic and acidic residues. K517 is covalently cross-linked (Glycyl lysine isopeptide (Lys-Gly) (interchain with G-Cter in SUMO1); alternate). K517 participates in a covalent cross-link: Glycyl lysine isopeptide (Lys-Gly) (interchain with G-Cter in SUMO2); alternate.

The protein belongs to the NAB family. Homomultimers may associate with EGR1 bound to DNA. Sumoylation by EGR2 represses EGR2 transcriptional activity in hindbrain. Highly expressed in brain and thymus, and at lower levels in spleen, kidney, heart and testis. Isoform 1 is predominantly expressed in testis, whereas isoform 3 is more abundant in thymus.

The protein resides in the nucleus. Acts as a transcriptional repressor for zinc finger transcription factors EGR1 and EGR2. Isoform 2 lacks repression ability. The protein is NGFI-A-binding protein 2 (Nab2) of Mus musculus (Mouse).